Reading from the N-terminus, the 488-residue chain is Malonate-semialdehyde dehydrogenase (488 aa).

The NAD(+) site is built by Ala-150, Phe-152, Lys-176, Glu-179, Arg-180, Ser-229, and Thr-251. The active-site Nucleophile is Cys-284. An NAD(+)-binding site is contributed by Glu-382.

It belongs to the aldehyde dehydrogenase family. IolA subfamily. In terms of assembly, homotetramer.

It catalyses the reaction 3-oxopropanoate + NAD(+) + CoA + H2O = hydrogencarbonate + acetyl-CoA + NADH + H(+). The enzyme catalyses 2-methyl-3-oxopropanoate + NAD(+) + CoA + H2O = propanoyl-CoA + hydrogencarbonate + NADH + H(+). The protein operates within polyol metabolism; myo-inositol degradation into acetyl-CoA; acetyl-CoA from myo-inositol: step 7/7. Catalyzes the oxidation of malonate semialdehyde (MSA) and methylmalonate semialdehyde (MMSA) into acetyl-CoA and propanoyl-CoA, respectively. Is involved in a myo-inositol catabolic pathway. Bicarbonate, and not CO2, is the end-product of the enzymatic reaction. In Listeria monocytogenes serotype 4b (strain CLIP80459), this protein is Malonate-semialdehyde dehydrogenase.